We begin with the raw amino-acid sequence, 448 residues long: N-succinylarginine dihydrolase (448 aa).

Residues Gly19–Ser28, Asn110, and His137–Arg138 contribute to the substrate site. The active site involves Glu174. A substrate-binding site is contributed by Arg214. The active site involves His250. Positions 252 and 365 each coordinate substrate. Catalysis depends on Cys371, which acts as the Nucleophile.

It belongs to the succinylarginine dihydrolase family. Homodimer.

It carries out the reaction N(2)-succinyl-L-arginine + 2 H2O + 2 H(+) = N(2)-succinyl-L-ornithine + 2 NH4(+) + CO2. The protein operates within amino-acid degradation; L-arginine degradation via AST pathway; L-glutamate and succinate from L-arginine: step 2/5. Functionally, catalyzes the hydrolysis of N(2)-succinylarginine into N(2)-succinylornithine, ammonia and CO(2). This is N-succinylarginine dihydrolase from Pseudomonas fluorescens (strain Pf0-1).